A 339-amino-acid polypeptide reads, in one-letter code: Nicotinate-nucleotide--dimethylbenzimidazole phosphoribosyltransferase (339 aa).

Catalysis depends on Glu306, which acts as the Proton acceptor.

Belongs to the CobT family.

It carries out the reaction 5,6-dimethylbenzimidazole + nicotinate beta-D-ribonucleotide = alpha-ribazole 5'-phosphate + nicotinate + H(+). It functions in the pathway nucleoside biosynthesis; alpha-ribazole biosynthesis; alpha-ribazole from 5,6-dimethylbenzimidazole: step 1/2. Functionally, catalyzes the synthesis of alpha-ribazole-5'-phosphate from nicotinate mononucleotide (NAMN) and 5,6-dimethylbenzimidazole (DMB). The chain is Nicotinate-nucleotide--dimethylbenzimidazole phosphoribosyltransferase from Brucella abortus (strain S19).